The primary structure comprises 321 residues: Solute carrier family 25 member 33 (321 aa).

3 Solcar repeats span residues 9–118 (ENTL…AKEQ), 126–213 (NSNI…LKKY), and 231–315 (TSFF…IVYL). 6 consecutive transmembrane segments (helical) span residues 12–32 (LLHL…TCPL), 49–65 (VYYP…AGMV), 121–141 (GIFV…AAFI), 190–210 (LTAS…YESL), 233–253 (FFGL…IAYP), and 298–318 (QIPN…LLED).

The protein belongs to the mitochondrial carrier (TC 2.A.29) family. In terms of tissue distribution, expressed in the central nervous system. Also expressed in testis and skeletal muscle. Weakly expressed in heart, liver, kidney, prostate, colon and peripheral blood leukocytes.

The protein localises to the mitochondrion inner membrane. The enzyme catalyses UTP(in) + UDP(out) = UTP(out) + UDP(in). It catalyses the reaction dUTP(out) + UTP(in) = dUTP(in) + UTP(out). It carries out the reaction 5-methyl-UTP(out) + UTP(in) = 5-methyl-UTP(in) + UTP(out). The catalysed reaction is 5-methyl-UDP(out) + UTP(in) = 5-methyl-UDP(in) + UTP(out). The enzyme catalyses UTP(in) + CTP(out) = UTP(out) + CTP(in). It catalyses the reaction CDP(out) + UTP(in) = CDP(in) + UTP(out). It carries out the reaction dCTP(out) + UTP(in) = dCTP(in) + UTP(out). The catalysed reaction is dCDP(out) + UTP(in) = dCDP(in) + UTP(out). The enzyme catalyses UTP(in) + GTP(out) = UTP(out) + GTP(in). It catalyses the reaction UTP(in) + GDP(out) = UTP(out) + GDP(in). It carries out the reaction dGTP(out) + UTP(in) = dGTP(in) + UTP(out). The catalysed reaction is dGDP(out) + UTP(in) = dGDP(in) + UTP(out). The enzyme catalyses ITP(out) + UTP(in) = ITP(in) + UTP(out). With respect to regulation, inhibited by pyridoxal 5'-phosphate, 4,7-diphenyl-1,10-phenanthroline, tannic acid, and mercurials (mercury dichloride, mersalyl acid, p-hydroxymercuribenzoate). Its function is as follows. Mitochondrial transporter that imports/exports pyrimidine nucleotides into and from mitochondria. Selectively transports uridine, thymidine, guanosine, cytosine and inosine (deoxy)nucleoside di- and triphosphates by an antiport mechanism. May import (deoxy)nucleoside triphosphates in exchange for intramitochondrial (deoxy)nucleoside diphosphates, thus providing precursors necessary for de novo synthesis of mitochondrial DNA and RNA while exporting products of their catabolism. Participates in mitochondrial genome maintenance, regulation of mitochondrial membrane potential and mitochondrial respiration. Upon INS or IGF1 stimulation regulates cell growth and proliferation by controlling mitochondrial DNA replication and transcription, the ratio of mitochondria-to nuclear-encoded components of the electron transport chain resulting in control of mitochondrial ROS production. Participates in dendritic cell endocytosis and may associate with mitochondrial oxidative phosphorylation. The polypeptide is Solute carrier family 25 member 33 (SLC25A33) (Homo sapiens (Human)).